The primary structure comprises 558 residues: MDTRNVIAAISLSAAVIILYSLFFQPDPATIKKNLAEQNKIENNEDTPSLDKNENFSKLSRADALKENDRIQFENGSVVGSISLKGAAIDDLTFKEYNIELNRNEKITLLSPRNVEDGYLIESGFVSTNKNIDIPDASTVWEVSGNNKLTNNNPVKLTWSNTQGITFEKHISLDDQFLFTVKEKIINSSDKSYNFYSYGQIIRNELPEISGFYILHEGFLSVLDDELIEEDYDDIQDKKFTQIAQDGFVAISDKFWVTSVIPPKGKEFKTTFDYKNKFRANYISTKGIEVKANSSIEEKIQIIVAAKRVNVIDGYAENLNINKFDLAIDWGFMYFITKPLFFVLDYFFKLLGNYGLAIIAVTICIRLAFFPLANFSFKSMGKMKLLAPEMARLKELHKDDKMKLQQAMMALYKKEKVNPMSGCLPILVQIPVFFALYKVLFVTIEMRHMPFYGWIHDLSDRDPTSLFNVFGLIPWDPPSFLLIGAWPIIMGITMWIQQKLNPTPPDPIQAKIFMFFPVFLTVILAPFPAGLVIYWSFNNIFTMIQQYIVQRKMTIKTT.

The next 6 helical transmembrane spans lie at Val6–Pro26, Leu326–Phe348, Gly355–Phe377, Leu424–Ile444, Val469–Ile489, and Ile512–Val532.

The protein belongs to the OXA1/ALB3/YidC family. Type 1 subfamily. Interacts with the Sec translocase complex via SecD. Specifically interacts with transmembrane segments of nascent integral membrane proteins during membrane integration.

The protein resides in the cell inner membrane. Required for the insertion and/or proper folding and/or complex formation of integral membrane proteins into the membrane. Involved in integration of membrane proteins that insert both dependently and independently of the Sec translocase complex, as well as at least some lipoproteins. Aids folding of multispanning membrane proteins. This Pelagibacter ubique (strain HTCC1062) protein is Membrane protein insertase YidC.